A 184-amino-acid polypeptide reads, in one-letter code: Gastrokine-1 (184 aa).

Positions 1–20 are cleaved as a signal peptide; the sequence is MKLTMFVVGLLGLLAAPGFA. A BRICHOS domain is found at 54-148; that stretch reads NNGWDSWNSL…MCRGIPTYVA (95 aa). Cys-81 and Cys-140 are oxidised to a cystine.

Belongs to the gastrokine family. Expressed in the stomach. Highly expressed specifically in surface cells of the antrum mucosa from where it is secreted.

It localises to the secreted. The protein resides in the cytoplasmic granule. The protein localises to the golgi apparatus. Its function is as follows. Has mitogenic activity and may be involved in maintaining the integrity of the gastric mucosal epithelium. The sequence is that of Gastrokine-1 (Gkn1) from Mus musculus (Mouse).